A 326-amino-acid polypeptide reads, in one-letter code: Ribosomal RNA small subunit methyltransferase H (326 aa).

Residues 35–37, aspartate 53, phenylalanine 80, aspartate 101, and glutamine 108 each bind S-adenosyl-L-methionine; that span reads GGY. Residues 260-306 form a disordered region; that stretch reads EGVSRHLPQASNAGAGNPPPSFQAVSRRAVKPLDAETRVNPRSRSAR.

It belongs to the methyltransferase superfamily. RsmH family.

The protein localises to the cytoplasm. It carries out the reaction cytidine(1402) in 16S rRNA + S-adenosyl-L-methionine = N(4)-methylcytidine(1402) in 16S rRNA + S-adenosyl-L-homocysteine + H(+). Specifically methylates the N4 position of cytidine in position 1402 (C1402) of 16S rRNA. The sequence is that of Ribosomal RNA small subunit methyltransferase H from Rhodospirillum rubrum (strain ATCC 11170 / ATH 1.1.1 / DSM 467 / LMG 4362 / NCIMB 8255 / S1).